Here is a 440-residue protein sequence, read N- to C-terminus: C4-dicarboxylate transport protein (440 aa).

Helical transmembrane passes span 7-29 (LYKSLYVQVLVAITIGILLGHYY), 49-66 (MVIAPIIFCTVVSGIAGM), 79-101 (ALLYFEIVSTIALIIGLVVVNVV), 143-165 (VVGAFANGDILQVLMFSVLFGFA), 186-208 (VMFNIINMIMKLAPIGAFGAMAF), 221-243 (LGYLMACFYITCLLFVLVVLGGI), 291-313 (VVGLVIPTGYSFNLDGTSIYLTM), 328-350 (ITHQITLLLVLLVASKGAAGVTG), and 355-377 (VLAATLSAVGHLPVAGLALILGI). Positions 419–440 (GGAPLIDTRPTDDLGVAEGPAR) are disordered.

Belongs to the dicarboxylate/amino acid:cation symporter (DAACS) (TC 2.A.23) family.

It is found in the cell inner membrane. Functionally, responsible for the transport of dicarboxylates such as succinate, fumarate, and malate from the periplasm across the membrane. This Pseudomonas putida (strain ATCC 47054 / DSM 6125 / CFBP 8728 / NCIMB 11950 / KT2440) protein is C4-dicarboxylate transport protein.